A 305-amino-acid chain; its full sequence is Glutaminase (305 aa).

Substrate-binding residues include Ser63, Asn113, Glu158, Asn165, Tyr189, Tyr241, and Val259.

Belongs to the glutaminase family. Homotetramer.

The catalysed reaction is L-glutamine + H2O = L-glutamate + NH4(+). The sequence is that of Glutaminase from Aliarcobacter butzleri (strain RM4018) (Arcobacter butzleri).